A 188-amino-acid chain; its full sequence is Elongation factor P (188 aa).

This sequence belongs to the elongation factor P family.

The protein resides in the cytoplasm. It participates in protein biosynthesis; polypeptide chain elongation. Involved in peptide bond synthesis. Stimulates efficient translation and peptide-bond synthesis on native or reconstituted 70S ribosomes in vitro. Probably functions indirectly by altering the affinity of the ribosome for aminoacyl-tRNA, thus increasing their reactivity as acceptors for peptidyl transferase. This Rickettsia massiliae (strain Mtu5) protein is Elongation factor P.